The sequence spans 450 residues: Putative receptor-like protein kinase At1g72540 (450 aa).

Phosphothreonine is present on Thr-73. The Protein kinase domain occupies 84–365 (FSKYNFLGEG…TVVKTLEPIL (282 aa)). ATP contacts are provided by residues 90-98 (LGEGGFGEV) and Lys-119. Residue Tyr-164 is modified to Phosphotyrosine. The active-site Proton acceptor is Asp-214. Phosphoserine is present on Ser-218. Phosphothreonine is present on Thr-254. A Phosphotyrosine modification is found at Tyr-262.

Belongs to the protein kinase superfamily. Ser/Thr protein kinase family.

The enzyme catalyses L-seryl-[protein] + ATP = O-phospho-L-seryl-[protein] + ADP + H(+). The catalysed reaction is L-threonyl-[protein] + ATP = O-phospho-L-threonyl-[protein] + ADP + H(+). The protein is Putative receptor-like protein kinase At1g72540 of Arabidopsis thaliana (Mouse-ear cress).